The primary structure comprises 387 residues: 3-ketoacyl-CoA thiolase (387 aa).

The active-site Acyl-thioester intermediate is the C91. Active-site proton acceptor residues include H343 and C373.

It belongs to the thiolase-like superfamily. Thiolase family. In terms of assembly, heterotetramer of two alpha chains (FadB) and two beta chains (FadA).

It localises to the cytoplasm. It catalyses the reaction an acyl-CoA + acetyl-CoA = a 3-oxoacyl-CoA + CoA. It functions in the pathway lipid metabolism; fatty acid beta-oxidation. Its function is as follows. Catalyzes the final step of fatty acid oxidation in which acetyl-CoA is released and the CoA ester of a fatty acid two carbons shorter is formed. The sequence is that of 3-ketoacyl-CoA thiolase from Escherichia fergusonii (strain ATCC 35469 / DSM 13698 / CCUG 18766 / IAM 14443 / JCM 21226 / LMG 7866 / NBRC 102419 / NCTC 12128 / CDC 0568-73).